Consider the following 165-residue polypeptide: Chorismate pyruvate-lyase (165 aa).

Positions 35, 77, 115, and 156 each coordinate substrate.

It belongs to the UbiC family. In terms of assembly, monomer.

The protein resides in the cytoplasm. The enzyme catalyses chorismate = 4-hydroxybenzoate + pyruvate. Its pathway is cofactor biosynthesis; ubiquinone biosynthesis. Removes the pyruvyl group from chorismate, with concomitant aromatization of the ring, to provide 4-hydroxybenzoate (4HB) for the ubiquinone pathway. This is Chorismate pyruvate-lyase from Escherichia coli O7:K1 (strain IAI39 / ExPEC).